Reading from the N-terminus, the 876-residue chain is Alanine--tRNA ligase (876 aa).

Zn(2+) is bound by residues H568, H572, C670, and H674.

Belongs to the class-II aminoacyl-tRNA synthetase family. It depends on Zn(2+) as a cofactor.

The protein resides in the cytoplasm. The enzyme catalyses tRNA(Ala) + L-alanine + ATP = L-alanyl-tRNA(Ala) + AMP + diphosphate. In terms of biological role, catalyzes the attachment of alanine to tRNA(Ala) in a two-step reaction: alanine is first activated by ATP to form Ala-AMP and then transferred to the acceptor end of tRNA(Ala). Also edits incorrectly charged Ser-tRNA(Ala) and Gly-tRNA(Ala) via its editing domain. The protein is Alanine--tRNA ligase of Geotalea uraniireducens (strain Rf4) (Geobacter uraniireducens).